A 470-amino-acid polypeptide reads, in one-letter code: 6-phosphofructo-2-kinase/fructose-2,6-bisphosphatase (470 aa).

The segment at 1–249 (MADRLRELTQ…VYYLMNIHVT (249 aa)) is 6-phosphofructo-2-kinase. A Phosphoserine; by PKA modification is found at Ser31. Residue 47–55 (GLPARGKTY) coordinates ATP. Beta-D-fructose 6-phosphate contacts are provided by Arg80 and Arg104. The active site involves Asp130. Beta-D-fructose 6-phosphate contacts are provided by Thr132 and Arg138. Cys160 is an active-site residue. Residue 169 to 174 (NITQVK) participates in ATP binding. Beta-D-fructose 6-phosphate contacts are provided by Lys174, Arg195, and Tyr199. Residues 250–470 (PRSIYLSRHG…EALDTVPEHF (221 aa)) are fructose-2,6-bisphosphatase. Residue Arg257 coordinates beta-D-fructose 2,6-bisphosphate. His258 (tele-phosphohistidine intermediate) is an active-site residue. Residues Asn264 and Gly270 each coordinate beta-D-fructose 2,6-bisphosphate. The Proton donor/acceptor role is filled by Glu327. Beta-D-fructose 2,6-bisphosphate-binding residues include Tyr338, Arg352, Lys356, Tyr367, Gln393, and Arg397. Position 349-352 (349-352 (FALR)) interacts with ATP. ATP is bound by residues 393-397 (QAVMR) and Tyr429.

The protein in the C-terminal section; belongs to the phosphoglycerate mutase family. Homodimer.

The enzyme catalyses beta-D-fructose 2,6-bisphosphate + H2O = beta-D-fructose 6-phosphate + phosphate. The catalysed reaction is beta-D-fructose 6-phosphate + ATP = beta-D-fructose 2,6-bisphosphate + ADP + H(+). With respect to regulation, phosphorylation results in inhibition of the kinase activity. Functionally, synthesis and degradation of fructose 2,6-bisphosphate. This chain is 6-phosphofructo-2-kinase/fructose-2,6-bisphosphatase, found in Aquarana catesbeiana (American bullfrog).